Reading from the N-terminus, the 692-residue chain is Transforming growth factor beta activator LRRC33 (692 aa).

A signal peptide spans 1–24; sequence MEFLPLWLCLGFHFLIVEWRSGRG. The Extracellular segment spans residues 25–650; the sequence is TATAASQGGC…CKWGQVDTGL (626 aa). In terms of domain architecture, LRRNT spans 29–56; the sequence is ASQGGCKVVDRVADCRSLNLASVPSGLP. LRR repeat units lie at residues 58 to 79, 82 to 103, 106 to 127, 133 to 155, 158 to 179, 182 to 203, 206 to 227, 228 to 239, 251 to 272, and 273 to 294; these read HSRM…SLQA, RLED…AFHE, HLQN…SATA, RLRR…MLQN, SLEV…VFEG, RLVE…AFDG, ELRR…SLTQ, LRFLNVSYNILE, ELEI…PQCG, and KLHT…YNTS. An N-linked (GlcNAc...) asparagine glycan is attached at N74. N155 carries an N-linked (GlcNAc...) asparagine glycan. An N-linked (GlcNAc...) asparagine glycan is attached at N232. N-linked (GlcNAc...) asparagine glycans are attached at residues N292, N309, and N312. LRR repeat units follow at residues 329-350, 353-374, 377-398, 403-424, 427-448, 463-484, 486-507, 512-533, 537-558, 559-580, and 585-605; these read ALRF…FLKK, SLSH…EHEP, ALTE…PGLT, NLRV…LFHS, SITT…VPLD, SLRS…PFQG, SLTH…SPLS, TLQV…MDFS, NLRE…KGSS, ALQT…VVSE, and GLQT…EGWG. Residue N408 is glycosylated (N-linked (GlcNAc...) asparagine). N500 is a glycosylation site (N-linked (GlcNAc...) asparagine). Residues 606–643 form the LRRCT domain; it reads ALQHFKTIADLSMVTCNLSSKIIRVVELPEGIPQDCKW. N622 carries an N-linked (GlcNAc...) asparagine glycan. A helical membrane pass occupies residues 651–671; the sequence is FYLVLILPSCLTLLVASTVIF. The Cytoplasmic portion of the chain corresponds to 672-692; that stretch reads LTFKKPLLQVIKSRCHWSSIY.

The protein belongs to the LRRC32/LRRC33 family. As to quaternary structure, interacts (via LRR repeats) with TLR2, TLR3, TLR4, TLR9 and probably other Toll-like receptors. Interacts with CYBB/NOX2; the interaction is direct. Interacts with TGFB1; associates via disulfide bonds with the Latency-associated peptide chain (LAP) regulatory chain of TGFB1, leading to regulate activation of TGF-beta-1.

Its subcellular location is the cell membrane. The protein resides in the endoplasmic reticulum membrane. In terms of biological role, key regulator of transforming growth factor beta-1 (TGFB1) specifically required for microglia function in the nervous system. Required for activation of latent TGF-beta-1 in macrophages and microglia: associates specifically via disulfide bonds with the Latency-associated peptide (LAP), which is the regulatory chain of TGFB1, and regulates integrin-dependent activation of TGF-beta-1. TGF-beta-1 activation mediated by LRRC33/NRROS is highly localized: there is little spreading of TGF-beta-1 activated from one microglial cell to neighboring microglia, suggesting the existence of localized and selective activation of TGF-beta-1 by LRRC33/NRROS. Indirectly plays a role in Toll-like receptor (TLR) signaling: ability to inhibit TLR-mediated NF-kappa-B activation and cytokine production is probably a consequence of its role in TGF-beta-1 signaling. The polypeptide is Transforming growth factor beta activator LRRC33 (Rattus norvegicus (Rat)).